We begin with the raw amino-acid sequence, 78 residues long: UPF0335 protein RP113 (78 aa).

The protein belongs to the UPF0335 family.

The sequence is that of UPF0335 protein RP113 from Rickettsia prowazekii (strain Madrid E).